A 104-amino-acid polypeptide reads, in one-letter code: Large ribosomal subunit protein bL21 (104 aa).

Belongs to the bacterial ribosomal protein bL21 family. In terms of assembly, part of the 50S ribosomal subunit. Contacts protein L20.

Its function is as follows. This protein binds to 23S rRNA in the presence of protein L20. This is Large ribosomal subunit protein bL21 from Tropheryma whipplei (strain TW08/27) (Whipple's bacillus).